Here is a 156-residue protein sequence, read N- to C-terminus: MSSNKINKKSIARIAAVQAIYQNILQNNDDMDDIMQNVLSFYQNNNSITDLPENLKISLSISHFKMLVKLVFENIHKLDEIIDNHLTNDKDPAHMPILLRALLRVSICELLFCPTTPAKVVINEYTDIANDMLNEHEIGFVNSVLDKIAKEHTRLI.

The protein belongs to the NusB family.

Functionally, involved in transcription antitermination. Required for transcription of ribosomal RNA (rRNA) genes. Binds specifically to the boxA antiterminator sequence of the ribosomal RNA (rrn) operons. In Rickettsia rickettsii (strain Iowa), this protein is Transcription antitermination protein NusB.